The primary structure comprises 265 residues: Glycosylphosphatidylinositol anchor biosynthesis protein 11 (265 aa).

Transmembrane regions (helical) follow at residues 49–69 (LLVV…SGLT) and 79–99 (GFLT…INLL). 2 N-linked (GlcNAc...) asparagine glycosylation sites follow: Asn111 and Asn112. The next 4 membrane-spanning stretches (helical) occupy residues 137-157 (IFVS…MGAP), 166-186 (LYLS…LSNL), 209-229 (ILSS…PIPL), and 240-260 (ITLL…SLIV).

Belongs to the PIGF family.

The protein resides in the endoplasmic reticulum membrane. The protein operates within glycolipid biosynthesis; glycosylphosphatidylinositol-anchor biosynthesis. In terms of biological role, acts in the GPI biosynthetic pathway between GlcNAc-PI synthesis and GPI transfer to protein. This is Glycosylphosphatidylinositol anchor biosynthesis protein 11 (GPI11) from Candida albicans (strain SC5314 / ATCC MYA-2876) (Yeast).